The primary structure comprises 232 residues: 2,3,4,5-tetrahydropyridine-2,6-dicarboxylate N-acetyltransferase (232 aa).

This sequence belongs to the transferase hexapeptide repeat family. DapH subfamily.

It catalyses the reaction (S)-2,3,4,5-tetrahydrodipicolinate + acetyl-CoA + H2O = L-2-acetamido-6-oxoheptanedioate + CoA. The protein operates within amino-acid biosynthesis; L-lysine biosynthesis via DAP pathway; LL-2,6-diaminopimelate from (S)-tetrahydrodipicolinate (acetylase route): step 1/3. Its function is as follows. Catalyzes the transfer of an acetyl group from acetyl-CoA to tetrahydrodipicolinate. This chain is 2,3,4,5-tetrahydropyridine-2,6-dicarboxylate N-acetyltransferase, found in Streptococcus mutans serotype c (strain ATCC 700610 / UA159).